A 118-amino-acid polypeptide reads, in one-letter code: NAD(P)H-quinone oxidoreductase subunit M (118 aa).

The protein belongs to the complex I NdhM subunit family. As to quaternary structure, NDH-1 can be composed of about 15 different subunits; different subcomplexes with different compositions have been identified which probably have different functions.

Its subcellular location is the cellular thylakoid membrane. It catalyses the reaction a plastoquinone + NADH + (n+1) H(+)(in) = a plastoquinol + NAD(+) + n H(+)(out). The enzyme catalyses a plastoquinone + NADPH + (n+1) H(+)(in) = a plastoquinol + NADP(+) + n H(+)(out). NDH-1 shuttles electrons from an unknown electron donor, via FMN and iron-sulfur (Fe-S) centers, to quinones in the respiratory and/or the photosynthetic chain. The immediate electron acceptor for the enzyme in this species is believed to be plastoquinone. Couples the redox reaction to proton translocation, and thus conserves the redox energy in a proton gradient. Cyanobacterial NDH-1 also plays a role in inorganic carbon-concentration. This chain is NAD(P)H-quinone oxidoreductase subunit M, found in Rippkaea orientalis (strain PCC 8801 / RF-1) (Cyanothece sp. (strain PCC 8801)).